The primary structure comprises 353 residues: MAADLPEATVQNILDQESLKWVFVGGKGGVGKTTCSSILAICLASVRSSVLIISTDPAHNLSDAFQQRFTKSPTLVQGFSNLFAMEVDPTVETDDMAGTDGMDGLFSDLANAIPGIDEAMSFAEMLKLVQTMDYATIVFDTAPTGHTLRLLQFPATLEKGLSKLMSLKSRFGGLMTQMSRMFGMEDEFGEDALLGRLEGLKDVIEQVNRQFKDPDMTTFVCVCIPEFLSLYETERLVQELAKFEIDTHNIIINQVLYDDEDVESKLLRARMRMQQKYLDQFYMLYDDFNITKLPLLPEEVTGVEALKAFSHKFLTPYHPTTSRSNVEELERKVHTLRLQLKTAEEELERVKSG.

Residue K27 to T34 coordinates ATP. D56 is an active-site residue. Residues E226 and N253 each coordinate ATP. Positions T320 to G353 form a coiled coil.

It belongs to the arsA ATPase family. As to quaternary structure, homodimer. Interacts with GET1 and GET4.

It is found in the cytoplasm. It localises to the cytosol. The protein localises to the endoplasmic reticulum. The enzyme catalyses ATP + H2O = ADP + phosphate + H(+). ATPase required for the post-translational delivery of tail-anchored (TA) proteins to the endoplasmic reticulum. Recognizes and selectively binds the transmembrane domain of TA proteins in the cytosol. This complex then targets to the endoplasmic reticulum by membrane-bound receptors, where the tail-anchored protein is released for insertion. This process is regulated by ATP binding and hydrolysis. ATP binding drives the homodimer towards the closed dimer state, facilitating recognition of newly synthesized TA membrane proteins. ATP hydrolysis is required for insertion. Subsequently, the homodimer reverts towards the open dimer state, lowering its affinity for the membrane-bound receptor, and returning it to the cytosol to initiate a new round of targeting. Involved in the control of root hair growth through the regulation of syntaxin SYP123 expression. In Arabidopsis thaliana (Mouse-ear cress), this protein is ATPase GET3A.